The chain runs to 493 residues: Glutamyl-tRNA(Gln) amidotransferase subunit A (493 aa).

Catalysis depends on charge relay system residues Lys-78 and Ser-158. The active-site Acyl-ester intermediate is the Ser-182.

It belongs to the amidase family. GatA subfamily. Heterotrimer of A, B and C subunits.

It catalyses the reaction L-glutamyl-tRNA(Gln) + L-glutamine + ATP + H2O = L-glutaminyl-tRNA(Gln) + L-glutamate + ADP + phosphate + H(+). Its function is as follows. Allows the formation of correctly charged Gln-tRNA(Gln) through the transamidation of misacylated Glu-tRNA(Gln) in organisms which lack glutaminyl-tRNA synthetase. The reaction takes place in the presence of glutamine and ATP through an activated gamma-phospho-Glu-tRNA(Gln). The polypeptide is Glutamyl-tRNA(Gln) amidotransferase subunit A (Beijerinckia indica subsp. indica (strain ATCC 9039 / DSM 1715 / NCIMB 8712)).